Consider the following 188-residue polypeptide: Elongation factor P (188 aa).

K34 carries the post-translational modification N6-(3,6-diaminohexanoyl)-5-hydroxylysine.

This sequence belongs to the elongation factor P family. May be beta-lysylated on the epsilon-amino group of Lys-34 by the combined action of EpmA and EpmB, and then hydroxylated on the C5 position of the same residue by EpmC (if this protein is present). Lysylation is critical for the stimulatory effect of EF-P on peptide-bond formation. The lysylation moiety may extend toward the peptidyltransferase center and stabilize the terminal 3-CCA end of the tRNA. Hydroxylation of the C5 position on Lys-34 may allow additional potential stabilizing hydrogen-bond interactions with the P-tRNA.

It is found in the cytoplasm. It functions in the pathway protein biosynthesis; polypeptide chain elongation. Functionally, involved in peptide bond synthesis. Alleviates ribosome stalling that occurs when 3 or more consecutive Pro residues or the sequence PPG is present in a protein, possibly by augmenting the peptidyl transferase activity of the ribosome. Modification of Lys-34 is required for alleviation. The sequence is that of Elongation factor P from Enterobacter sp. (strain 638).